The chain runs to 910 residues: DNA mismatch repair protein MutS (910 aa).

ATP is bound at residue 658-665 (GPNMGGKS).

The protein belongs to the DNA mismatch repair MutS family.

Its function is as follows. This protein is involved in the repair of mismatches in DNA. It is possible that it carries out the mismatch recognition step. This protein has a weak ATPase activity. This chain is DNA mismatch repair protein MutS, found in Brucella anthropi (strain ATCC 49188 / DSM 6882 / CCUG 24695 / JCM 21032 / LMG 3331 / NBRC 15819 / NCTC 12168 / Alc 37) (Ochrobactrum anthropi).